A 382-amino-acid chain; its full sequence is Aminotransferase FGSG_00049 (382 aa).

Arg-80 contacts pyridoxal 5'-phosphate. Lys-181 bears the N6-(pyridoxal phosphate)lysine mark. Glu-217 serves as a coordination point for pyridoxal 5'-phosphate.

It belongs to the class-IV pyridoxal-phosphate-dependent aminotransferase family. Pyridoxal 5'-phosphate serves as cofactor.

The protein operates within mycotoxin biosynthesis. Aminotransferase; part of the gene cluster that mediates the biosynthesis of gramillins A and B, bicyclic lipopeptides that induce cell death in maize leaves but not in wheat leaves. The nonribosomal peptide synthetase GRA1 incorporates respectively a glutamic adic (Glu), a leucine (Leu), a serine (Ser), a hydroxyglutamine (HOGln), a 2-amino decanoic acid, and 2 cysteins (CysB and CysA). The biosynthesis of 2-amino decanoic acid incorporated in gramillins could be initiated by a fatty acid synthase composed of the alpha and beta subunits FGSG_00036 and FGSG_11656. The cytochrome P450 monooxygenase FGSG_15680 could hydroxylate the fatty acid chain. Subsequent oxidation to the ketone by the oxidoreductase FGSG_00048 and transamination by aminotransferase FGSG_00049 could form 2-amino-decanoic acid. On the other hand, FGSG_15680 could also be responsible for the HO-modified glutamine at the gamma-position. Whether hydroxylation occurs on the fully assembled product or on the Gln residue prior to assembly into the gramillins requires further proof. The thioredoxin FGSG_00043 could also be required for the disulfide-bond formation between CysA and CysB. The specific involvement of the remaining proteins from the cluster is more difficult to discern, but could have broader regulatory (FGSG_00040 and FGSG_11657) or enzymatic functions (FGSG_00044 and FGSG_00045). The final C-domain of GRA1 does not possess the expected sequence of a termination CT domain, often implicated in macrocyclization and release of a cyclopeptidein fungal NRPs; and the thioesterase FGSG_00047 may act in concert with the terminal C-domain of GRA1 to catalyze the formation of the macrocyclic anhydride and release of the products. The chain is Aminotransferase FGSG_00049 from Gibberella zeae (strain ATCC MYA-4620 / CBS 123657 / FGSC 9075 / NRRL 31084 / PH-1) (Wheat head blight fungus).